The chain runs to 198 residues: MYVRIVQDLIRELGKLPGIGPKSAQRIAFFILQNPSFDIDRLSETLQSVRKQVQFCKVCGNFSEEDECVICSDPRRDRGVICVVEEPKDVVAIEKTREFSGLYHVLGGAISPIDGVGPDDLNIRQLLQRLADGTITEVVLATDPNMEGEATASYIARVISAMRIRVSKLASGLPVGSDLEYADEITLGRALEGRQYIN.

Residues 56–71 (CKVCGNFSEEDECVIC) form a C4-type zinc finger. One can recognise a Toprim domain in the interval 79–174 (GVICVVEEPK…RVSKLASGLP (96 aa)).

It belongs to the RecR family.

May play a role in DNA repair. It seems to be involved in an RecBC-independent recombinational process of DNA repair. It may act with RecF and RecO. This chain is Recombination protein RecR, found in Tropheryma whipplei (strain TW08/27) (Whipple's bacillus).